We begin with the raw amino-acid sequence, 644 residues long: Sodium/hydrogen exchanger 9 (644 aa).

Residues 1-20 (MAGQLRFTSGKDEDHFQHQG) lie on the Lumenal side of the membrane. A helical membrane pass occupies residues 21–41 (AVELLAFNFLLILTILTIWLF). Residues 42–45 (KNHR) lie on the Cytoplasmic side of the membrane. The helical transmembrane segment at 46-66 (FRFLHETGGAMVYGLIMGLIL) threads the bilayer. At 67-126 (RYATAPTDIDSGTVYNCGNLFFSPSTLLVNITDQVYEYKYQREINQHNISPHQGNAILEK) the chain is on the lumenal side. A helical transmembrane segment spans residues 127–147 (MTFDPEIFFNVLLPPIIFHAG). Topologically, residues 148–164 (YSLKKRHFFQNLGSILT) are cytoplasmic. Residues 165–185 (YAFLGTAISCVVIGLIMYGFV) traverse the membrane as a helical segment. Residues 186-203 (KAMVHAGQLKSGDFHFTD) are Lumenal-facing. The helical transmembrane segment at 204 to 224 (CLFFGSLMSATDPVTVLAIFH) threads the bilayer. At 225–235 (ELHVDPDLYTL) the chain is on the cytoplasmic side. Residues 236 to 256 (LFGESVLNDAVAIVLTYSISI) form a helical membrane-spanning segment. At 257 to 277 (YSPKENPNAFDTAAFFQSVGN) the chain is on the lumenal side. Residues 278–298 (FLGIFAGSFAMGSAYAVVTAL) form a helical membrane-spanning segment. At 299–309 (LTKFTKLREFP) the chain is on the cytoplasmic side. Residues 310–327 (MLETGLFFLLSWSAFLSA) traverse the membrane as a helical segment. Topologically, residues 328–333 (EAAGLT) are lumenal. A helical transmembrane segment spans residues 334–350 (GIVAVLFCGVTQAHYTY). At 351–364 (NNLSSDSKLRTKQL) the chain is on the cytoplasmic side. Residues 365 to 385 (FEFMNFLAENVIFCYMGLALF) form a helical membrane-spanning segment. Residue threonine 386 is a topological domain, lumenal. The helical transmembrane segment at 387–407 (FQNHIFNALFILGAFLAIFVA) threads the bilayer. Residues 408–429 (RACNIYPLSFLLNLGRKQKIPW) are Cytoplasmic-facing. The chain crosses the membrane as a helical span at residues 430–450 (NFQHMMMFSGLRGAIAFALAI). Topologically, residues 451–465 (RNTESQPKQMMFTTT) are lumenal. The helical transmembrane segment at 466–486 (LLLVFFTVWVFGGGTTPMLTW) threads the bilayer. Over 487–644 (LQIRVGVDLD…EQTRGQPQMD (158 aa)) the chain is Cytoplasmic. Residues 590–644 (YQEQSPSPSSPTTKLALDQKSSGQTPGKENIYEGDLGLGGYDLKLEQTRGQPQMD) form a disordered region.

It belongs to the monovalent cation:proton antiporter 1 (CPA1) transporter (TC 2.A.36) family. As to quaternary structure, homodimer; phosphatidylinositol-4,5-bisphosphate (PIP2) and phosphatidylinositol 3,4,5-trisphosphate (PIP3) could be involved in the dimer stabilization. Interacts (via the C-terminus) with RACK1. Interacts with CHP1. Expressed in the brain. Highly expressed in immune cells, specifically macrophages.

It is found in the late endosome membrane. It localises to the cell membrane. Its subcellular location is the early endosome membrane. The protein localises to the recycling endosome membrane. The protein resides in the cytoplasmic vesicle. It is found in the phagosome membrane. The enzyme catalyses Na(+)(in) + H(+)(out) = Na(+)(out) + H(+)(in). The catalysed reaction is K(+)(in) + H(+)(out) = K(+)(out) + H(+)(in). Its function is as follows. Endosomal Na(+), K(+)/H(+) antiporter. Mediates the electroneutral exchange of endosomal luminal H(+) for a cytosolic Na(+) or K(+). By facilitating proton efflux, SLC9A9 counteracts the acidity generated by vacuolar (V)-ATPase, thereby limiting luminal acidification. Regulates organellar pH and consequently, endosome maturation and endocytic trafficking of plasma membrane receptors and neurotransporters. Promotes the recycling of transferrin receptors back to the cell surface to facilitate additional iron uptake in the brain. Regulates synaptic transmission by regulating the luminal pH of axonal endosomes. Regulates phagosome lumenal pH, thus affecting phagosome maturation, and consequently, microbicidal activity in macrophages. Can also be active at the cell surface of specialized cells, e.g., in the inner ear hair bundles uses the high K(+) of the endolymph to regulate intracelular pH. This chain is Sodium/hydrogen exchanger 9 (Slc9a9), found in Mus musculus (Mouse).